A 212-amino-acid chain; its full sequence is Thymidylate kinase (212 aa).

ATP contacts are provided by residues 16-21 (RAGKTT), arginine 97, arginine 182, and lysine 192.

Belongs to the thymidylate kinase family. The cofactor is Mg(2+).

It catalyses the reaction dTMP + ATP = dTDP + ADP. It functions in the pathway pyrimidine metabolism; dTTP biosynthesis. Its function is as follows. Catalyzes the phosphorylation of thymidine monophosphate (dTMP) to thymidine diphosphate (dTDP), the immediate precursor for the DNA building block dTTP, with ATP as the preferred phosphoryl donor in the presence of Mg(2+). In Danio rerio (Zebrafish), this protein is Thymidylate kinase (dtymk).